The sequence spans 147 residues: Large ribosomal subunit protein uL13 (147 aa).

This sequence belongs to the universal ribosomal protein uL13 family. Part of the 50S ribosomal subunit.

This protein is one of the early assembly proteins of the 50S ribosomal subunit, although it is not seen to bind rRNA by itself. It is important during the early stages of 50S assembly. The polypeptide is Large ribosomal subunit protein uL13 (Corynebacterium glutamicum (strain R)).